Consider the following 323-residue polypeptide: NADH-ubiquinone oxidoreductase chain 1 (323 aa).

A run of 8 helical transmembrane segments spans residues 9–29 (ILNPLIYMVPVLLAVAFLTLI), 76–96 (LFVLPVLALTLALTLWAPMPM), 107–127 (ILFVLALSSLAVYSILGSGWA), 145–165 (ISYEVSLGLILLSVIIFSGGF), 175–195 (EATWLALPAWPLAAMWYISTL), 227–247 (LFFLAEYANILLMNTLSAVLF), 258–278 (EFTSLTLMTKAALLSMVFLWV), and 298–318 (FLPLTLALVIWHLSLSTACAG).

It belongs to the complex I subunit 1 family.

Its subcellular location is the mitochondrion inner membrane. It catalyses the reaction a ubiquinone + NADH + 5 H(+)(in) = a ubiquinol + NAD(+) + 4 H(+)(out). In terms of biological role, core subunit of the mitochondrial membrane respiratory chain NADH dehydrogenase (Complex I) that is believed to belong to the minimal assembly required for catalysis. Complex I functions in the transfer of electrons from NADH to the respiratory chain. The immediate electron acceptor for the enzyme is believed to be ubiquinone. In Gadus morhua (Atlantic cod), this protein is NADH-ubiquinone oxidoreductase chain 1 (MT-ND1).